Reading from the N-terminus, the 238-residue chain is Ditrans,polycis-undecaprenyl-diphosphate synthase ((2E,6E)-farnesyl-diphosphate specific) (238 aa).

The active site involves D14. D14 contributes to the Mg(2+) binding site. Residues 15-18 (GNGR), W19, R27, H31, and 59-61 (SSE) each bind substrate. N62 serves as the catalytic Proton acceptor. Substrate is bound by residues W63, R65, R182, and 188 to 190 (RIS). E201 contributes to the Mg(2+) binding site.

It belongs to the UPP synthase family. As to quaternary structure, homodimer. The cofactor is Mg(2+).

It catalyses the reaction 8 isopentenyl diphosphate + (2E,6E)-farnesyl diphosphate = di-trans,octa-cis-undecaprenyl diphosphate + 8 diphosphate. In terms of biological role, catalyzes the sequential condensation of isopentenyl diphosphate (IPP) with (2E,6E)-farnesyl diphosphate (E,E-FPP) to yield (2Z,6Z,10Z,14Z,18Z,22Z,26Z,30Z,34E,38E)-undecaprenyl diphosphate (di-trans,octa-cis-UPP). UPP is the precursor of glycosyl carrier lipid in the biosynthesis of bacterial cell wall polysaccharide components such as peptidoglycan and lipopolysaccharide. This chain is Ditrans,polycis-undecaprenyl-diphosphate synthase ((2E,6E)-farnesyl-diphosphate specific), found in Legionella pneumophila subsp. pneumophila (strain Philadelphia 1 / ATCC 33152 / DSM 7513).